A 456-amino-acid polypeptide reads, in one-letter code: MTMHDTPSGLNWDLGLAPPADGLWCGLRLVAELTQADQPLPADAPACLVVQGGMLRWVGPQAQLPAAFSALRRFDARDAARTGAHGAAPGAPGTLATPALVDCHTHLVYGGQRADEFALRLAGASYEALAQAGGGILASVQATRAASEDQLFALAMPRLQALLAEGVGAIEIKSGYGLALEHERKQLRVARRLGQACAVTVRTSFLGAHALPPEYAGRSQDYIDLVCQQMLPALAEQGLVDAVDMFCERIAFTLAETEQVFLAAQQLGLPVKLHAGQLSDMGGAALAARYGALSCDHLEHLSADAIAAMQAAGTVAVLLPGAWYTLRGQQRPPIEALRAAGVPMAVATDHNPGSSPALSLLLMAHMACTLFHLSLSEALAGITTHAARALGLQDSHGLIAAGRPANFVLWPLQEAAELVYWLGHKPACTIVRQGRVVRDGLGLLDRPEMPVLRDGA.

Fe(3+) is bound by residues H104 and H106. Zn(2+) contacts are provided by H104 and H106. Residues R113, Y176, and H209 each contribute to the 4-imidazolone-5-propanoate site. Y176 contacts N-formimidoyl-L-glutamate. H274 provides a ligand contact to Fe(3+). H274 provides a ligand contact to Zn(2+). Position 277 (Q277) interacts with 4-imidazolone-5-propanoate. Position 349 (D349) interacts with Fe(3+). D349 contacts Zn(2+). Positions 351 and 353 each coordinate N-formimidoyl-L-glutamate. S354 is a binding site for 4-imidazolone-5-propanoate.

This sequence belongs to the metallo-dependent hydrolases superfamily. HutI family. The cofactor is Zn(2+). Fe(3+) is required as a cofactor.

Its subcellular location is the cytoplasm. It carries out the reaction 4-imidazolone-5-propanoate + H2O = N-formimidoyl-L-glutamate. It functions in the pathway amino-acid degradation; L-histidine degradation into L-glutamate; N-formimidoyl-L-glutamate from L-histidine: step 3/3. Its function is as follows. Catalyzes the hydrolytic cleavage of the carbon-nitrogen bond in imidazolone-5-propanoate to yield N-formimidoyl-L-glutamate. It is the third step in the universal histidine degradation pathway. The protein is Imidazolonepropionase of Verminephrobacter eiseniae (strain EF01-2).